The sequence spans 106 residues: Replication restart protein PriB (106 aa).

The SSB domain maps to 4 to 103 (VNRLVLSGTV…LHAEQIELID (100 aa)).

It belongs to the PriB family. Homodimer. Interacts with PriA and DnaT. Component of the replication restart primosome. Primosome assembly occurs via a 'hand-off' mechanism. PriA binds to replication forks, subsequently PriB then DnaT bind; DnaT then displaces ssDNA to generate the helicase loading substrate.

In terms of biological role, involved in the restart of stalled replication forks, which reloads the replicative helicase on sites other than the origin of replication; the PriA-PriB pathway is the major replication restart pathway. During primosome assembly it facilitates complex formation between PriA and DnaT on DNA; stabilizes PriA on DNA. Stimulates the DNA unwinding activity of PriA helicase. This Pectobacterium carotovorum subsp. carotovorum (strain PC1) protein is Replication restart protein PriB.